The sequence spans 169 residues: Large ribosomal subunit protein uL5 (169 aa).

The protein belongs to the universal ribosomal protein uL5 family. In terms of assembly, part of the 50S ribosomal subunit; contacts the 5S rRNA and probably tRNA. Forms a bridge to the 30S subunit in the 70S ribosome.

Its function is as follows. This is one of the proteins that bind and probably mediate the attachment of the 5S RNA into the large ribosomal subunit, where it forms part of the central protuberance. In the 70S ribosome it contacts protein S13 of the 30S subunit (bridge B1b), connecting the 2 subunits; this bridge is implicated in subunit movement. May contact the P site tRNA; the 5S rRNA and some of its associated proteins might help stabilize positioning of ribosome-bound tRNAs. The sequence is that of Large ribosomal subunit protein uL5 from Methanosarcina mazei (strain ATCC BAA-159 / DSM 3647 / Goe1 / Go1 / JCM 11833 / OCM 88) (Methanosarcina frisia).